A 248-amino-acid polypeptide reads, in one-letter code: tRNA (guanine-N(1)-)-methyltransferase (248 aa).

Residues Gly-113 and 133-138 (VGDYVL) contribute to the S-adenosyl-L-methionine site.

The protein belongs to the RNA methyltransferase TrmD family. In terms of assembly, homodimer.

The protein localises to the cytoplasm. The enzyme catalyses guanosine(37) in tRNA + S-adenosyl-L-methionine = N(1)-methylguanosine(37) in tRNA + S-adenosyl-L-homocysteine + H(+). In terms of biological role, specifically methylates guanosine-37 in various tRNAs. The chain is tRNA (guanine-N(1)-)-methyltransferase from Shewanella oneidensis (strain ATCC 700550 / JCM 31522 / CIP 106686 / LMG 19005 / NCIMB 14063 / MR-1).